The chain runs to 425 residues: Histidine--tRNA ligase (425 aa).

The protein belongs to the class-II aminoacyl-tRNA synthetase family. In terms of assembly, homodimer.

It localises to the cytoplasm. It catalyses the reaction tRNA(His) + L-histidine + ATP = L-histidyl-tRNA(His) + AMP + diphosphate + H(+). The chain is Histidine--tRNA ligase from Listeria monocytogenes serotype 4b (strain F2365).